The following is a 596-amino-acid chain: A-type ATP synthase subunit A (596 aa).

241-248 (GPFGSGKT) serves as a coordination point for ATP.

Belongs to the ATPase alpha/beta chains family. As to quaternary structure, has multiple subunits with at least A(3), B(3), C, D, E, F, H, I and proteolipid K(x).

The protein localises to the cell membrane. It catalyses the reaction ATP + H2O + 4 H(+)(in) = ADP + phosphate + 5 H(+)(out). Functionally, component of the A-type ATP synthase that produces ATP from ADP in the presence of a proton gradient across the membrane. The A chain is the catalytic subunit. The protein is A-type ATP synthase subunit A of Ignicoccus hospitalis (strain KIN4/I / DSM 18386 / JCM 14125).